Here is a 166-residue protein sequence, read N- to C-terminus: Cyclin-dependent kinase 4 inhibitor D (166 aa).

Methionine 1 carries the post-translational modification N-acetylmethionine. 4 ANK repeats span residues 41–69, 73–102, 106–135, and 138–166; these read FGKTALQVMMFGSPTIALELLKQGASPNV, SGTTPAHDAARTGFLDTLKVLVEHGADVNA, TGALPIHLAVREGHTSVVSFLATESDLHHR, and TGLTPLELARGRGAQELMDILQRHTVAPL.

This sequence belongs to the CDKN2 cyclin-dependent kinase inhibitor family. Interacts with CDK6.

It localises to the nucleus. It is found in the cytoplasm. Functionally, interacts strongly with CDK4 and CDK6 and inhibits them. The protein is Cyclin-dependent kinase 4 inhibitor D (CDKN2D) of Bos taurus (Bovine).